A 153-amino-acid polypeptide reads, in one-letter code: Protein eva-1 homolog A (153 aa).

The chain crosses the membrane as a helical span at residues 37–57 (ALYFVCGVCLGLVLTLIALVV). Residues 66 to 97 (KTQQAPKKTGKTVENTSDTSDSDSDWDNTSDL) are disordered.

Belongs to the EVA1 family.

It is found in the endoplasmic reticulum membrane. Its subcellular location is the lysosome membrane. Functionally, acts as a regulator of programmed cell death, mediating both autophagy and apoptosis. The chain is Protein eva-1 homolog A (Eva1a) from Danio rerio (Zebrafish).